Here is a 452-residue protein sequence, read N- to C-terminus: tRNA modification GTPase MnmE (452 aa).

Arginine 21, glutamate 78, and lysine 118 together coordinate (6S)-5-formyl-5,6,7,8-tetrahydrofolate. Residues 214–375 (GMKVVIAGRP…LREHLKQSMG (162 aa)) form the TrmE-type G domain. A K(+)-binding site is contributed by asparagine 224. GTP-binding positions include 224–229 (NAGKSS), 243–249 (TDIAGTT), and 268–271 (DTAG). Mg(2+) is bound at residue serine 228. 3 residues coordinate K(+): threonine 243, isoleucine 245, and threonine 248. Threonine 249 contacts Mg(2+). Lysine 452 lines the (6S)-5-formyl-5,6,7,8-tetrahydrofolate pocket.

The protein belongs to the TRAFAC class TrmE-Era-EngA-EngB-Septin-like GTPase superfamily. TrmE GTPase family. In terms of assembly, homodimer. Heterotetramer of two MnmE and two MnmG subunits. K(+) is required as a cofactor.

The protein localises to the cytoplasm. Exhibits a very high intrinsic GTPase hydrolysis rate. Involved in the addition of a carboxymethylaminomethyl (cmnm) group at the wobble position (U34) of certain tRNAs, forming tRNA-cmnm(5)s(2)U34. This chain is tRNA modification GTPase MnmE, found in Actinobacillus succinogenes (strain ATCC 55618 / DSM 22257 / CCUG 43843 / 130Z).